The primary structure comprises 936 residues: Protein SIEL (936 aa).

In terms of assembly, interacts with SHR, MGP, SCR, JKD, CPC, TMO7 and AGL21, but not with LFY or STM.

It is found in the nucleus. The protein resides in the endosome. Its subcellular location is the cytoplasm. It localises to the cell cortex. In terms of biological role, intracellular shuttle that promotes movement of SHR from the stele into the endodermis. Required for SHR association to endosomes and localization, and for intercellular movement of SHR. The chain is Protein SIEL from Arabidopsis thaliana (Mouse-ear cress).